The primary structure comprises 88 residues: Small ribosomal subunit protein bS20 (88 aa).

This sequence belongs to the bacterial ribosomal protein bS20 family.

Binds directly to 16S ribosomal RNA. This is Small ribosomal subunit protein bS20 from Bradyrhizobium diazoefficiens (strain JCM 10833 / BCRC 13528 / IAM 13628 / NBRC 14792 / USDA 110).